A 270-amino-acid chain; its full sequence is MTLKIAIAGAGGRMGCQLIQAVHSAEGVELGAAFERKGSSLVGTDAGELAGIGHLGVAVSDDLESQKDKFDLLIDFTRPEGTLEHIAFCVANNKKMVIGTTGFDENGKVAIKAASDKIAIVFASNFSVGVNLVFKLLEKAAKVMGDYCDIEVIEAHHRHKVDAPSGTALSMGEHIAKTLGRDLKTHGVFCREGITGERKRDEIGFSTIRASDVVGEHSVWFADIGERVEISHKASSRMTFANGAVRAGKWLENKANGLFDMTDVLDLNNL.

NAD(+) is bound by residues 9 to 14 (GAGGRM) and Glu-35. Arg-36 lines the NADP(+) pocket. Residues 99-101 (GTT) and 123-126 (ASNF) each bind NAD(+). Catalysis depends on His-156, which acts as the Proton donor/acceptor. A (S)-2,3,4,5-tetrahydrodipicolinate-binding site is contributed by His-157. The active-site Proton donor is the Lys-160. Position 166–167 (166–167 (GT)) interacts with (S)-2,3,4,5-tetrahydrodipicolinate.

This sequence belongs to the DapB family.

Its subcellular location is the cytoplasm. The enzyme catalyses (S)-2,3,4,5-tetrahydrodipicolinate + NAD(+) + H2O = (2S,4S)-4-hydroxy-2,3,4,5-tetrahydrodipicolinate + NADH + H(+). It carries out the reaction (S)-2,3,4,5-tetrahydrodipicolinate + NADP(+) + H2O = (2S,4S)-4-hydroxy-2,3,4,5-tetrahydrodipicolinate + NADPH + H(+). It functions in the pathway amino-acid biosynthesis; L-lysine biosynthesis via DAP pathway; (S)-tetrahydrodipicolinate from L-aspartate: step 4/4. In terms of biological role, catalyzes the conversion of 4-hydroxy-tetrahydrodipicolinate (HTPA) to tetrahydrodipicolinate. This Haemophilus influenzae (strain ATCC 51907 / DSM 11121 / KW20 / Rd) protein is 4-hydroxy-tetrahydrodipicolinate reductase.